A 197-amino-acid chain; its full sequence is Segregation and condensation protein B (197 aa).

The protein belongs to the ScpB family. As to quaternary structure, homodimer. Homodimerization may be required to stabilize the binding of ScpA to the Smc head domains. Component of a cohesin-like complex composed of ScpA, ScpB and the Smc homodimer, in which ScpA and ScpB bind to the head domain of Smc. The presence of the three proteins is required for the association of the complex with DNA.

The protein resides in the cytoplasm. Participates in chromosomal partition during cell division. May act via the formation of a condensin-like complex containing Smc and ScpA that pull DNA away from mid-cell into both cell halves. This Halalkalibacterium halodurans (strain ATCC BAA-125 / DSM 18197 / FERM 7344 / JCM 9153 / C-125) (Bacillus halodurans) protein is Segregation and condensation protein B.